Reading from the N-terminus, the 296-residue chain is Non-homologous end joining protein Ku (296 aa).

The 177-residue stretch at T11–S187 folds into the Ku domain. The tract at residues A254 to G296 is disordered. The segment covering R258 to H273 has biased composition (basic and acidic residues). Positions A275 to P285 are enriched in low complexity. The span at R286–G296 shows a compositional bias: basic residues.

The protein belongs to the prokaryotic Ku family. As to quaternary structure, homodimer. Interacts with LigD.

With LigD forms a non-homologous end joining (NHEJ) DNA repair enzyme, which repairs dsDNA breaks with reduced fidelity. Binds linear dsDNA with 5'- and 3'- overhangs but not closed circular dsDNA nor ssDNA. Recruits and stimulates the ligase activity of LigD. This Anaeromyxobacter sp. (strain K) protein is Non-homologous end joining protein Ku.